Reading from the N-terminus, the 552-residue chain is Serine palmitoyltransferase 3 (552 aa).

A disordered region spans residues methionine 1–cysteine 29. Residues proline 59–leucine 79 traverse the membrane as a helical segment. Lysine 371 bears the N6-(pyridoxal phosphate)lysine mark.

The protein belongs to the class-II pyridoxal-phosphate-dependent aminotransferase family. As to quaternary structure, component of the serine palmitoyltransferase (SPT) complex, which is composed of SPTLC1, SPTLC2 or SPTLC3 and SPTSSA or SPTSSB. The heterodimer consisting of SPTLC1 and SPTLC2/SPTLC3 forms the catalytic core of the enzyme, while SPTSSA or SPTSSB subunits determine substrate specificity. SPT also interacts with ORMDL proteins, especially ORMDL3, which negatively regulate SPT activity in the presence of ceramides. It depends on pyridoxal 5'-phosphate as a cofactor. As to expression, expressed in most tissues, except peripheral blood cells and bone marrow, with highest levels in heart, kidney, liver, uterus and skin.

It is found in the endoplasmic reticulum membrane. It catalyses the reaction L-serine + hexadecanoyl-CoA + H(+) = 3-oxosphinganine + CO2 + CoA. The enzyme catalyses dodecanoyl-CoA + L-serine + H(+) = 3-oxotetradecasphinganine + CO2 + CoA. The catalysed reaction is tetradecanoyl-CoA + L-serine + H(+) = 3-oxohexadecasphinganine + CO2 + CoA. It carries out the reaction octadecanoyl-CoA + L-serine + H(+) = 3-oxoeicosasphinganine + CO2 + CoA. The protein operates within lipid metabolism; sphingolipid metabolism. SPT complex catalytic activity is negatively regulated by ORMDL proteins, including ORMDL3, in the presence of ceramides. This mechanism allows to maintain ceramide levels at sufficient concentrations for the production of complex sphingolipids, but which prevents the accumulation of ceramides to levels that trigger apoptosis. Component of the serine palmitoyltransferase multisubunit enzyme (SPT) that catalyzes the initial and rate-limiting step in sphingolipid biosynthesis by condensing L-serine and activated acyl-CoA (most commonly palmitoyl-CoA) to form long-chain bases. The SPT complex is composed of SPTLC1, SPTLC2 or SPTLC3 and SPTSSA or SPTSSB. Within this complex, the heterodimer consisting of SPTLC1 and SPTLC2/SPTLC3 forms the catalytic core. The composition of the serine palmitoyltransferase (SPT) complex determines the substrate preference. The SPTLC1-SPTLC2-SPTSSA complex shows a strong preference for C16-CoA substrate, while the SPTLC1-SPTLC3-SPTSSA isozyme uses both C14-CoA and C16-CoA as substrates, with a slight preference for C14-CoA. The SPTLC1-SPTLC2-SPTSSB complex shows a strong preference for C18-CoA substrate, while the SPTLC1-SPTLC3-SPTSSB isozyme displays an ability to use a broader range of acyl-CoAs, without apparent preference. This Homo sapiens (Human) protein is Serine palmitoyltransferase 3.